The following is a 289-amino-acid chain: uncharacterized protein (289 aa).

This is an uncharacterized protein from Drosophila melanogaster (Fruit fly).